The following is a 227-amino-acid chain: Inner membrane lipoprotein SadB (227 aa).

The first 21 residues, 1–21, serve as a signal peptide directing secretion; that stretch reads MHKNGKFIPLLALGFTFFLSG. Residue cysteine 22 is the site of N-palmitoyl cysteine attachment. Cysteine 22 carries S-diacylglycerol cysteine lipidation. The stretch at 31–68 forms a coiled coil; the sequence is VEEMKEQQKEQETKINLLEKQQKEQEAKINLLEKQQAT.

Homotrimer.

It localises to the cell inner membrane. Functionally, required for proper surface expression of the autotransporter adhesin SadA. Could be directly involved in the biogenesis of functionally active SadA. The chain is Inner membrane lipoprotein SadB from Salmonella typhimurium (strain LT2 / SGSC1412 / ATCC 700720).